The chain runs to 144 residues: Maximins 11/H1 (144 aa).

Residues 1–18 (MNFKYIVAVSFLIASAYA) form the signal peptide. Positions 19 to 43 (RSEENDEQSLSQRDVLEEESLREIR) are excised as a propeptide. Asparagine amide is present on Asn70. A propeptide spanning residues 74–123 (TAEDHEVMKRLEAVMRDLDSLDYPEEASERETRGFNQEEIANLFTKKEKR) is cleaved from the precursor. Leu143 is modified (leucine amide).

It belongs to the bombinin family. Expressed by the skin glands.

The protein localises to the secreted. Maximin-11 shows antimicrobial activity against bacteria and against the fungus C.albicans. It has little hemolytic activity. Its function is as follows. Maximin-H1 shows antibacterial activity against both Gram-positive and Gram-negative bacteria. It also shows antimicrobial activity against the fungus C.albicans. Shows strong hemolytic activity. The chain is Maximins 11/H1 from Bombina maxima (Giant fire-bellied toad).